The sequence spans 675 residues: Methionine--tRNA ligase (675 aa).

The 'HIGH' region signature appears at 12–22; the sequence is PYANGPIHLGH. The Zn(2+) site is built by C143, C146, C156, and C159. Positions 328–332 match the 'KMSKS' region motif; sequence KMSKS. K331 is a binding site for ATP. Residues 574–675 form the tRNA-binding domain; that stretch reads DFAKVDLRIA…QGAQPGMRVK (102 aa).

This sequence belongs to the class-I aminoacyl-tRNA synthetase family. MetG type 1 subfamily. In terms of assembly, homodimer. Requires Zn(2+) as cofactor.

The protein resides in the cytoplasm. It carries out the reaction tRNA(Met) + L-methionine + ATP = L-methionyl-tRNA(Met) + AMP + diphosphate. Its function is as follows. Is required not only for elongation of protein synthesis but also for the initiation of all mRNA translation through initiator tRNA(fMet) aminoacylation. This chain is Methionine--tRNA ligase, found in Alkalilimnicola ehrlichii (strain ATCC BAA-1101 / DSM 17681 / MLHE-1).